Here is a 497-residue protein sequence, read N- to C-terminus: Serine/threonine protein phosphatase 2A 57 kDa regulatory subunit B' epsilon isoform (497 aa).

The interval 12–71 (KFNKSDQHHQDNNNNNNNTSTNTVVRGSRTTTPAPSSVSNGESQTTAQSPSQTPNHPMFT) is disordered. Positions 23-34 (NNNNNNNTSTNT) are enriched in low complexity. Polar residues predominate over residues 35–71 (VVRGSRTTTPAPSSVSNGESQTTAQSPSQTPNHPMFT).

This sequence belongs to the phosphatase 2A regulatory subunit B56 family. In terms of assembly, PP2A consists of a common heteromeric enzyme, composed of a catalytic subunit (subunits C), a constant regulatory subunit (subunit A), and a variety of regulatory subunits such as subunits B (the R2/B/PR55/B55, R3/B''/PR72/PR130/PR59 and R5/B'/B56 families). Expressed ubiquitously.

Its subcellular location is the cytoplasm. Functionally, the B regulatory subunit may modulate substrate selectivity and catalytic activity, and may also direct the localization of the catalytic enzyme to a particular subcellular compartment. The polypeptide is Serine/threonine protein phosphatase 2A 57 kDa regulatory subunit B' epsilon isoform (B'EPSILON) (Arabidopsis thaliana (Mouse-ear cress)).